The primary structure comprises 348 residues: Alcohol dehydrogenase 2 (348 aa).

Ser2 bears the N-acetylserine mark. Cys44 lines the Zn(2+) pocket. NAD(+)-binding residues include His45, Thr46, and His49. 7 residues coordinate Zn(2+): His67, Glu68, Cys98, Cys101, Cys104, Cys112, and Cys154. Residues Gly181, Gly182, Leu183, Asp202, and Lys207 each contribute to the NAD(+) site. Phosphoserine is present on Ser213. Phe222 contacts NAD(+). Phosphothreonine is present on Thr223. Glycyl lysine isopeptide (Lys-Gly) (interchain with G-Cter in ubiquitin) cross-links involve residues Lys226 and Lys234. Residue Val269 participates in NAD(+) binding. The residue at position 279 (Ser279) is a Phosphoserine. Residue Lys287 forms a Glycyl lysine isopeptide (Lys-Gly) (interchain with G-Cter in ubiquitin) linkage. Positions 294 and 296 each coordinate NAD(+). The residue at position 316 (Ser316) is a Phosphoserine. Residue Lys319 forms a Glycyl lysine isopeptide (Lys-Gly) (interchain with G-Cter in ubiquitin) linkage. Arg341 serves as a coordination point for NAD(+).

This sequence belongs to the zinc-containing alcohol dehydrogenase family. In terms of assembly, homotetramer. Zn(2+) serves as cofactor.

The protein resides in the cytoplasm. The catalysed reaction is a primary alcohol + NAD(+) = an aldehyde + NADH + H(+). It catalyses the reaction a secondary alcohol + NAD(+) = a ketone + NADH + H(+). The enzyme catalyses ethanol + NAD(+) = acetaldehyde + NADH + H(+). It carries out the reaction butan-1-ol + NAD(+) = butanal + NADH + H(+). The catalysed reaction is hexan-1-ol + NAD(+) = hexanal + NADH + H(+). Its function is as follows. Preferentially oxidative, glucose-repressed isozyme that catalyzes the conversion of ethanol to acetaldehyde. Main enzyme involved in ethanol consumption. Acts on a variety of primary unbranched aliphatic alcohols. Also produces ethanol from glucose, albeit less than ADH1. This is Alcohol dehydrogenase 2 (ADH2) from Saccharomyces cerevisiae (strain ATCC 204508 / S288c) (Baker's yeast).